Consider the following 491-residue polypeptide: Alpha-2-antiplasmin (491 aa).

The first 27 residues, 1 to 27 (MALLRGLLVLSLSCLQGPCFTFSPVSA), serve as a signal peptide directing secretion. A propeptide spanning residues 28–39 (VDLPGQQPVSEQ) is cleaved from the precursor. A disulfide bridge links Cys70 with Cys143. Residues Asn126, Asn295, Asn309, and Asn316 are each glycosylated (N-linked (GlcNAc...) asparagine). Residues 439 to 491 (SALPQLQEQRDSPDNRLIGQNDKADFHGGKTFGPDLKLAPRMEEDYPQFSSPK) are disordered. Residue Tyr484 is modified to Sulfotyrosine.

Belongs to the serpin family. Forms protease inhibiting heterodimer with TMPRSS7. Post-translationally, proteolytically cleaved at Pro-35 by both the prolyl endopeptidase FAP form and antiplasmin-cleaving enzyme FAP soluble form to generate mature alpha-2-antiplasmin. Expressed by the liver and secreted in plasma.

The protein resides in the secreted. Serine protease inhibitor. The major targets of this inhibitor are plasmin and trypsin, but it also inactivates matriptase-3/TMPRSS7 and chymotrypsin. The polypeptide is Alpha-2-antiplasmin (Serpinf2) (Mus musculus (Mouse)).